The chain runs to 272 residues: Tumor necrosis factor receptor superfamily member 4 (272 aa).

Residues 1–19 (MYVWVQQPTALLLLALTLG) form the signal peptide. Residues 20-211 (VTARRLNCVK…PPTLVTPEGP (192 aa)) are Extracellular-facing. 2 TNFR-Cys repeats span residues 26 to 61 (NCVK…TLCH) and 62 to 103 (PCET…DTVC). Intrachain disulfides connect Cys27–Cys38, Cys39–Cys52, Cys42–Cys60, Cys63–Cys77, Cys80–Cys95, Cys83–Cys103, Cys105–Cys123, and Cys126–Cys139. Residues 104-124 (RCRPGTQPRQDSGYKLGVDCV) form a TNFR-Cys 3; truncated repeat. A TNFR-Cys 4 repeat occupies 125 to 165 (PCPPGHFSPGNNQACKPWTNCTLSGKQTRHPASDSLDAVCE). Residue Asn144 is glycosylated (N-linked (GlcNAc...) asparagine). Cys145 and Cys164 are oxidised to a cystine. The helical transmembrane segment at 212-236 (AFAVLLGLGLGLLAPLTVLLALYLL) threads the bilayer. The Cytoplasmic segment spans residues 237–272 (RKAWRLPNTPKPCWGNSFRTPIQEEHTDAHFTLAKI).

As to quaternary structure, interacts with TRAF2, TRAF3 and TRAF5. In terms of tissue distribution, expressed in CD4(+) T-cells and in T-helper Th17 cells (at protein level).

It localises to the membrane. Receptor for TNFSF4/OX40L/GP34. Is a costimulatory molecule implicated in long-term T-cell immunity. The sequence is that of Tumor necrosis factor receptor superfamily member 4 (Tnfrsf4) from Mus musculus (Mouse).